We begin with the raw amino-acid sequence, 347 residues long: Microtubule-associated protein Jupiter (347 aa).

Residues 1 to 14 (MISNFDCTDNQASS) show a composition bias toward polar residues. The tract at residues 1–33 (MISNFDCTDNQASSKVLRPPGGGSSDIFGSEMP) is disordered. Residue serine 24 is modified to Phosphoserine. Threonine 35 and threonine 96 each carry phosphothreonine. Phosphoserine is present on residues serine 105, serine 134, and serine 145. Disordered regions lie at residues 127-193 (HYNG…PTPP) and 303-347 (GNPV…SGLW). Residues 132–145 (SGSVSSASSSVSSS) show a composition bias toward low complexity. Residues 146–164 (TENLKMNSGSRSVFRNMST) are compositionally biased toward polar residues. The span at 181 to 193 (PPSPVPIEVPTPP) shows a compositional bias: pro residues.

Belongs to the MAP Jupiter family.

Its subcellular location is the nucleus. It localises to the cytoplasm. The protein localises to the cytoskeleton. The protein resides in the spindle. Its function is as follows. Binds to all microtubule populations. In Drosophila yakuba (Fruit fly), this protein is Microtubule-associated protein Jupiter.